The chain runs to 285 residues: Inositol polyphosphate 1-phosphatase (285 aa).

Mg(2+) is bound by residues E68, D106, L108, and D109. 1D-myo-inositol 1,4-bisphosphate contacts are provided by D109, G110, T111, S173, G195, S197, and K200. Residue D223 coordinates Mg(2+).

The protein belongs to the inositol monophosphatase superfamily. As to quaternary structure, monomer. Requires Mg(2+) as cofactor.

It localises to the cytoplasm. The catalysed reaction is 1D-myo-inositol 1,4-bisphosphate + H2O = 1D-myo-inositol 4-phosphate + phosphate. It carries out the reaction adenosine 3',5'-bisphosphate + H2O = AMP + phosphate. Its activity is regulated as follows. Partially inhibited by Li(2+). In terms of biological role, catalyzes the hydrolysis of the 1-position phosphate from inositol 1,4-bisphosphate. Is also able to convert 3'(2')-phosphoadenosine 5'-phosphate (PAP) to AMP but with less efficiency. This chain is Inositol polyphosphate 1-phosphatase, found in Entamoeba histolytica (strain ATCC 30459 / HM-1:IMSS / ABRM).